Consider the following 158-residue polypeptide: Large ribosomal subunit protein uL11 (158 aa).

Residues 1–28 (MAGTIEALVPGGQATPGPPLGPELGPTP) are disordered.

Belongs to the universal ribosomal protein uL11 family. Part of the ribosomal stalk of the 50S ribosomal subunit. Interacts with L10 and the large rRNA to form the base of the stalk. L10 forms an elongated spine to which L12 dimers bind in a sequential fashion forming a multimeric L10(L12)X complex.

Forms part of the ribosomal stalk which helps the ribosome interact with GTP-bound translation factors. This Halorubrum lacusprofundi (strain ATCC 49239 / DSM 5036 / JCM 8891 / ACAM 34) protein is Large ribosomal subunit protein uL11.